A 206-amino-acid chain; its full sequence is MIGKLKGTLDEIDEDHCLVDIHGVGYVAYCSARTLAALPSPGEAVVLFIETYVREDMLRLYGFQSALEREWFRLLLNNVPGVGAKVALAILSTLAPADLANAIALRDIAMVSRAPGVGKKVAERIVTELKNKAPAYAGAASGTIGLKQELGEGVAPAPITDAVSALVNLGYSRDTAANAVAAALKTAGEDADASKLIRFGLKELAR.

The domain I stretch occupies residues 1 to 64; sequence MIGKLKGTLD…EDMLRLYGFQ (64 aa). The interval 65-144 is domain II; sequence SALEREWFRL…AYAGAASGTI (80 aa). The flexible linker stretch occupies residues 145 to 154; it reads GLKQELGEGV. A domain III region spans residues 154-206; that stretch reads VAPAPITDAVSALVNLGYSRDTAANAVAAALKTAGEDADASKLIRFGLKELAR.

It belongs to the RuvA family. In terms of assembly, homotetramer. Forms an RuvA(8)-RuvB(12)-Holliday junction (HJ) complex. HJ DNA is sandwiched between 2 RuvA tetramers; dsDNA enters through RuvA and exits via RuvB. An RuvB hexamer assembles on each DNA strand where it exits the tetramer. Each RuvB hexamer is contacted by two RuvA subunits (via domain III) on 2 adjacent RuvB subunits; this complex drives branch migration. In the full resolvosome a probable DNA-RuvA(4)-RuvB(12)-RuvC(2) complex forms which resolves the HJ.

The protein resides in the cytoplasm. Functionally, the RuvA-RuvB-RuvC complex processes Holliday junction (HJ) DNA during genetic recombination and DNA repair, while the RuvA-RuvB complex plays an important role in the rescue of blocked DNA replication forks via replication fork reversal (RFR). RuvA specifically binds to HJ cruciform DNA, conferring on it an open structure. The RuvB hexamer acts as an ATP-dependent pump, pulling dsDNA into and through the RuvAB complex. HJ branch migration allows RuvC to scan DNA until it finds its consensus sequence, where it cleaves and resolves the cruciform DNA. This chain is Holliday junction branch migration complex subunit RuvA, found in Mesorhizobium japonicum (strain LMG 29417 / CECT 9101 / MAFF 303099) (Mesorhizobium loti (strain MAFF 303099)).